A 278-amino-acid chain; its full sequence is Hydroxyethylthiazole kinase (278 aa).

Met-51 contributes to the substrate binding site. ATP-binding residues include Arg-127 and Ser-173. Gly-201 provides a ligand contact to substrate.

This sequence belongs to the Thz kinase family. It depends on Mg(2+) as a cofactor.

It catalyses the reaction 5-(2-hydroxyethyl)-4-methylthiazole + ATP = 4-methyl-5-(2-phosphooxyethyl)-thiazole + ADP + H(+). Its pathway is cofactor biosynthesis; thiamine diphosphate biosynthesis; 4-methyl-5-(2-phosphoethyl)-thiazole from 5-(2-hydroxyethyl)-4-methylthiazole: step 1/1. Catalyzes the phosphorylation of the hydroxyl group of 4-methyl-5-beta-hydroxyethylthiazole (THZ). This is Hydroxyethylthiazole kinase from Leptothrix cholodnii (strain ATCC 51168 / LMG 8142 / SP-6) (Leptothrix discophora (strain SP-6)).